The primary structure comprises 235 residues: Glycerol-3-phosphate acyltransferase (235 aa).

6 consecutive transmembrane segments (helical) span residues 4 to 24, 56 to 76, 90 to 110, 126 to 146, 152 to 172, and 191 to 211; these read LIVI…IIAG, AVTL…VVFF, VALR…TVFA, FGIA…TIFV, VASI…KYLF, and IHDS…FAII.

Belongs to the PlsY family. Probably interacts with PlsX.

It localises to the cell inner membrane. It catalyses the reaction an acyl phosphate + sn-glycerol 3-phosphate = a 1-acyl-sn-glycero-3-phosphate + phosphate. It functions in the pathway lipid metabolism; phospholipid metabolism. In terms of biological role, catalyzes the transfer of an acyl group from acyl-phosphate (acyl-PO(4)) to glycerol-3-phosphate (G3P) to form lysophosphatidic acid (LPA). This enzyme utilizes acyl-phosphate as fatty acyl donor, but not acyl-CoA or acyl-ACP. This chain is Glycerol-3-phosphate acyltransferase, found in Prosthecochloris aestuarii (strain DSM 271 / SK 413).